Consider the following 171-residue polypeptide: LIM domain transcription factor LMO4-B (171 aa).

Residues 1–19 (MVNNRISESTTTAVSNNGS) are compositionally biased toward polar residues. Positions 1-20 (MVNNRISESTTTAVSNNGSP) are disordered. LIM zinc-binding domains follow at residues 22–84 (KACA…LFGN) and 86–148 (GACN…GLLN).

Its function is as follows. Acts as a positive cofactor of GATA transcription factors to establish the identity of the ventral mesoderm during gastrulation. Down-regulation in the dorsal mesoderm is necessary for the proper formation of this territory since, when present, lmo4 may bind ldb1 and restrict the availability of this cofactor for Spemman organizer transcription factors. At neurula stages, suppresses primary neuron differentiation and modulates gene expression at the Isthmic Organizer of the midbrain-hindbrain boundary. The chain is LIM domain transcription factor LMO4-B (lmo4-b) from Xenopus laevis (African clawed frog).